The following is a 501-amino-acid chain: Aspartyl/glutamyl-tRNA(Asn/Gln) amidotransferase subunit B (501 aa).

A disordered region spans residues 272 to 291; it reads QETRHYQETDGTTSKGRPKE.

The protein belongs to the GatB/GatE family. GatB subfamily. In terms of assembly, heterotrimer of A, B and C subunits.

It catalyses the reaction L-glutamyl-tRNA(Gln) + L-glutamine + ATP + H2O = L-glutaminyl-tRNA(Gln) + L-glutamate + ADP + phosphate + H(+). The catalysed reaction is L-aspartyl-tRNA(Asn) + L-glutamine + ATP + H2O = L-asparaginyl-tRNA(Asn) + L-glutamate + ADP + phosphate + 2 H(+). Functionally, allows the formation of correctly charged Asn-tRNA(Asn) or Gln-tRNA(Gln) through the transamidation of misacylated Asp-tRNA(Asn) or Glu-tRNA(Gln) in organisms which lack either or both of asparaginyl-tRNA or glutaminyl-tRNA synthetases. The reaction takes place in the presence of glutamine and ATP through an activated phospho-Asp-tRNA(Asn) or phospho-Glu-tRNA(Gln). The polypeptide is Aspartyl/glutamyl-tRNA(Asn/Gln) amidotransferase subunit B (Corynebacterium efficiens (strain DSM 44549 / YS-314 / AJ 12310 / JCM 11189 / NBRC 100395)).